The sequence spans 121 residues: uncharacterized protein (121 aa).

2 disordered regions span residues 1-41 (MRRQ…QESR) and 94-121 (GGTI…GLRR). Positions 98 to 108 (SGQQSRNSSLP) are enriched in polar residues.

As to expression, predominantly expressed in tissues containing motile cilia. Also expressed in non-motile ciliated adult olfactory bulbs.

The protein localises to the cytoplasm. Its subcellular location is the cytoskeleton. The protein resides in the cilium basal body. This is an uncharacterized protein from Mus musculus (Mouse).